Consider the following 155-residue polypeptide: MTEAAEATFSADIQLIQRIIPHRYPFLLVDRVRDIVPNKSAVGIKCVTMNEPQFTGHFPGLPIFPGVQIIEAMAQTSAVLVGVSMDLADKGAKVYFMGIDGAKFRRKVVPGDVLEMTVTVKRGGGKVWKFEGRASVDGELAAEAEFSAMLDLPKG.

Histidine 57 is a catalytic residue.

Belongs to the thioester dehydratase family. FabZ subfamily.

The protein localises to the cytoplasm. The catalysed reaction is a (3R)-hydroxyacyl-[ACP] = a (2E)-enoyl-[ACP] + H2O. Functionally, involved in unsaturated fatty acids biosynthesis. Catalyzes the dehydration of short chain beta-hydroxyacyl-ACPs and long chain saturated and unsaturated beta-hydroxyacyl-ACPs. The chain is 3-hydroxyacyl-[acyl-carrier-protein] dehydratase FabZ from Cereibacter sphaeroides (strain KD131 / KCTC 12085) (Rhodobacter sphaeroides).